A 493-amino-acid chain; its full sequence is Argininosuccinate lyase (493 aa).

This sequence belongs to the lyase 1 family. Argininosuccinate lyase subfamily.

Its subcellular location is the cytoplasm. The catalysed reaction is 2-(N(omega)-L-arginino)succinate = fumarate + L-arginine. Its pathway is amino-acid biosynthesis; L-arginine biosynthesis; L-arginine from L-ornithine and carbamoyl phosphate: step 3/3. This Methanospirillum hungatei JF-1 (strain ATCC 27890 / DSM 864 / NBRC 100397 / JF-1) protein is Argininosuccinate lyase.